Reading from the N-terminus, the 366-residue chain is Galactoside alpha-(1,2)-fucosyltransferase 1 (366 aa).

Topologically, residues 1–8 (MWPLSHRH) are cytoplasmic. A helical; Signal-anchor for type II membrane protein transmembrane segment spans residues 9 to 25 (LCLAFLLVCVLSAISFF). Residues 26–366 (LHIHQDSFPH…LSPLWTLAEP (341 aa)) lie on the Lumenal side of the membrane. 3 N-linked (GlcNAc...) asparagine glycosylation sites follow: N66, N302, and N328.

This sequence belongs to the glycosyltransferase 11 family.

It localises to the golgi apparatus. It is found in the golgi stack membrane. It catalyses the reaction a beta-D-galactosyl-(1-&gt;4)-N-acetyl-beta-D-glucosaminyl derivative + GDP-beta-L-fucose = an alpha-L-Fuc-(1-&gt;2)-beta-D-Gal-(1-&gt;4)-beta-D-GlcNAc derivative + GDP + H(+). The enzyme catalyses a ganglioside GA1 + GDP-beta-L-fucose = a ganglioside Fuc-GA1 + GDP + H(+). It carries out the reaction a beta-D-Gal-(1-&gt;3)-beta-D-GlcNAc-(1-&gt;3)-beta-D-Gal-(1-&gt;4)-beta-D-Glc-(1&lt;-&gt;1')-Cer(d18:1(4E)) + GDP-beta-L-fucose = alpha-L-fucosyl-(1-&gt;2)- beta-D-galactosyl-(1-&gt;3)-N-acetyl-beta-D-glucosaminyl-(1-&gt;3)-beta-D-galactosyl-(1-&gt;4)-beta-D-glucosyl-(1&lt;-&gt;1')-N-acylsphing-4-enine + GDP + H(+). The catalysed reaction is a neolactoside nLc4Cer(d18:1(4E)) + GDP-beta-L-fucose = a neolactoside IV(2)-alpha-Fuc-nLc4Cer(d18:1(4E)) + GDP + H(+). It catalyses the reaction a ganglioside GM1 + GDP-beta-L-fucose = a ganglioside Fuc-GM1 + GDP + H(+). The enzyme catalyses beta-D-galactosyl-(1-&gt;3)-N-acetyl-D-galactosamine + GDP-beta-L-fucose = alpha-L-fucosyl-(1-&gt;2)-beta-D-galactosyl-(1-&gt;3)-N-acetyl-D-galactosamine + GDP + H(+). It functions in the pathway protein modification; protein glycosylation. Functionally, catalyzes the transfer of L-fucose, from a guanosine diphosphate-beta-L-fucose, to the terminal galactose residue of glycoconjugates through an alpha(1,2) linkage leading to H antigen synthesis that is an intermediate substrate in the synthesis of ABO blood group antigens. H antigen is essential for maturation of the glomerular layer of the main olfactory bulb, in cell migration and early cell-cell contacts during tumor associated angiogenesis. Preferentially fucosylates soluble lactose and to a lesser extent fucosylates glycolipids gangliosides GA1 and GM1a. The sequence is that of Galactoside alpha-(1,2)-fucosyltransferase 1 from Lagothrix lagotricha (Brown woolly monkey).